Reading from the N-terminus, the 287-residue chain is 4-hydroxybenzoate octaprenyltransferase (287 aa).

Helical transmembrane passes span 21–39, 95–115, 116–136, 138–158, 161–181, 213–233, 234–251, and 264–284; these read PIGT…WLAA, VLAL…TMNP, LTIG…FMKR, IPIP…MAYA, ANAL…WTIA, IIGA…QLSE, LGSS…LFVY, and CFQA…GVVI.

This sequence belongs to the UbiA prenyltransferase family. Mg(2+) is required as a cofactor.

The protein localises to the cell inner membrane. The enzyme catalyses all-trans-octaprenyl diphosphate + 4-hydroxybenzoate = 4-hydroxy-3-(all-trans-octaprenyl)benzoate + diphosphate. Its pathway is cofactor biosynthesis; ubiquinone biosynthesis. Catalyzes the prenylation of para-hydroxybenzoate (PHB) with an all-trans polyprenyl group. Mediates the second step in the final reaction sequence of ubiquinone-8 (UQ-8) biosynthesis, which is the condensation of the polyisoprenoid side chain with PHB, generating the first membrane-bound Q intermediate 3-octaprenyl-4-hydroxybenzoate. The polypeptide is 4-hydroxybenzoate octaprenyltransferase (Aeromonas hydrophila subsp. hydrophila (strain ATCC 7966 / DSM 30187 / BCRC 13018 / CCUG 14551 / JCM 1027 / KCTC 2358 / NCIMB 9240 / NCTC 8049)).